We begin with the raw amino-acid sequence, 858 residues long: Autoinducer 2 sensor kinase/phosphatase LuxQ (858 aa).

A run of 2 helical transmembrane segments spans residues 14–34 (STLITKIIILVLAPIILGIFV) and 362–382 (LFNFALSPIMVWSEAGVLIQI). Residues 488 to 710 (KMSHEIRTPI…TFVVTLPVKD (223 aa)) enclose the Histidine kinase domain. A Phosphohistidine; by autocatalysis modification is found at H491. The Response regulatory domain occupies 735-850 (KVLLVEDNHT…ALHEAFVDFK (116 aa)). 4-aspartylphosphate is present on D784.

As to quaternary structure, binds the complex formed by the autoinducer and LuxP.

It is found in the cell inner membrane. The enzyme catalyses ATP + protein L-histidine = ADP + protein N-phospho-L-histidine.. Its function is as follows. At low cell density, in absence of autoinducer has a kinase activity, and autophosphorylates on a histidine residue. The phosphoryl group is then transferred to an aspartate residue in the response regulator domain. The phosphoryl group is transferred to LuxU, and ultimately to LuxO. At high cell density, in the presence of autoinducer, the kinase activity is inactivated, and the response regulator domain has a phosphatase activity. The protein is Autoinducer 2 sensor kinase/phosphatase LuxQ (luxQ) of Vibrio parahaemolyticus serotype O3:K6 (strain RIMD 2210633).